The primary structure comprises 391 residues: tRNA (cytosine(38)-C(5))-methyltransferase (391 aa).

The SAM-dependent MTase C5-type domain occupies 4-391; it reads LRVLELYSGV…VAKLIKILYE (388 aa). Residues 13-15, aspartate 34, 57-58, and serine 76 contribute to the S-adenosyl-L-methionine site; these read VGG and IE. Residue cysteine 79 is part of the active site. Serine 376 contacts S-adenosyl-L-methionine.

It belongs to the class I-like SAM-binding methyltransferase superfamily. C5-methyltransferase family. As to expression, ubiquitous. Higher expression in testis, ovary and thymus and at much lower levels in spleen, prostate, colon, small intestine, and peripheral blood leukocytes.

The protein resides in the cytoplasm. It carries out the reaction cytidine(38) in tRNA + S-adenosyl-L-methionine = 5-methylcytidine(38) in tRNA + S-adenosyl-L-homocysteine + H(+). Functionally, specifically methylates cytosine 38 in the anticodon loop of tRNA(Asp). Has higher activity on tRNA(Asp) modified with queuosine at position 34. The chain is tRNA (cytosine(38)-C(5))-methyltransferase (TRDMT1) from Homo sapiens (Human).